Reading from the N-terminus, the 323-residue chain is Aquaporin-4 (323 aa).

The Cytoplasmic segment spans residues 1–36 (MSDGAAARRWGKCGHSCSRESIMVAFKGVWTQAFWK). 2 S-palmitoyl cysteine lipidation sites follow: C13 and C17. A helical transmembrane segment spans residues 37 to 57 (AVSAEFLATLIFVLLGVGSTI). Residues 58 to 69 (NWGGSENPLPVD) are Extracellular-facing. A helical membrane pass occupies residues 70–89 (MVLISLCFGLSIATMVQCFG). The Cytoplasmic segment spans residues 90 to 93 (HISG). The segment at residues 94–101 (GHINPAVT) is an intramembrane region (discontinuously helical). The short motif at 97 to 99 (NPA) is the NPA 1 element. Over 102–115 (VAMVCTRKISIAKS) the chain is Cytoplasmic. Residue S111 is modified to Phosphoserine; by PKG. The chain crosses the membrane as a helical span at residues 116–136 (VFYIIAQCLGAIIGAGILYLV). At 137–155 (TPPSVVGGLGVTTVHGNLT) the chain is on the extracellular side. N-linked (GlcNAc...) asparagine glycosylation is present at N153. Residues 156–176 (AGHGLLVELIITFQLVFTIFA) form a helical membrane-spanning segment. At 177-184 (SCDSKRTD) the chain is on the cytoplasmic side. S180 is modified (phosphoserine; by PKC). The helical transmembrane segment at 185 to 205 (VTGSIALAIGFSVAIGHLFAI) threads the bilayer. The N-linked (GlcNAc...) asparagine glycan is linked to N206. Residues 206-208 (NYT) are Extracellular-facing. An intramembrane region (discontinuously helical) is located at residues 209 to 222 (GASMNPARSFGPAV). The NPA 2 signature appears at 213-215 (NPA). Over 223–231 (IMGNWANHW) the chain is Extracellular. A helical transmembrane segment spans residues 232-252 (IYWVGPIMGAVLAGALYEYVF). Residues 253 to 323 (CPDVELKRRL…DSSGEVLSSV (71 aa)) are Cytoplasmic-facing. S276 and S285 each carry phosphoserine. T289 is modified (phosphothreonine). Position 321 is a phosphoserine (S321).

The protein belongs to the MIP/aquaporin (TC 1.A.8) family. In terms of assembly, homotetramer. The tetramers can form oligomeric arrays in membranes. The size of the oligomers differs between tissues and is smaller in skeletal muscle than in brain. Interaction between AQP4 oligomeric arrays in close-by cells can contribute to cell-cell adhesion. Part of a complex containing MLC1, TRPV4, HEPACAM and ATP1B1. Phosphorylation by PKC at Ser-180 reduces conductance by 50%. Phosphorylation by PKG at Ser-111 in response to glutamate increases conductance by 40%; this increase is not due to increased presence at the cell membrane. In terms of processing, isoform 2: Palmitoylated on its N-terminal region. Isoform 1: Not palmitoylated. In terms of tissue distribution, detected in brain cortex, especially around cortical blood vessels, and subjacent to pia, with lower levels in parenchymal membranes. Detected in ependymal and astroglial cells in brain. Detected in supporting Hensen's cells, inner sulcus cells and Claudius cells in the inner ear. Detected in skeletal muscle. Detected in gastric parietal cells. Detected in principal cells in collecting ducts in kidney medulla (at protein level). Detected in brain, heart and skeletal muscle.

It localises to the cell membrane. It is found in the basolateral cell membrane. Its subcellular location is the endosome membrane. The protein localises to the sarcolemma. The protein resides in the cell projection. The catalysed reaction is H2O(in) = H2O(out). In terms of biological role, forms a water-specific channel. Plays an important role in brain water homeostasis and in glymphatic solute transport. Required for a normal rate of water exchange across the blood brain interface. Required for normal levels of cerebrospinal fluid influx into the brain cortex and parenchyma along paravascular spaces that surround penetrating arteries, and for normal drainage of interstitial fluid along paravenous drainage pathways. Thereby, it is required for normal clearance of solutes from the brain interstitial fluid, including soluble beta-amyloid peptides derived from APP. Plays a redundant role in urinary water homeostasis and urinary concentrating ability. This is Aquaporin-4 (Aqp4) from Mus musculus (Mouse).